We begin with the raw amino-acid sequence, 620 residues long: Chaperone protein HscA homolog (620 aa).

It belongs to the heat shock protein 70 family.

Chaperone involved in the maturation of iron-sulfur cluster-containing proteins. Has a low intrinsic ATPase activity which is markedly stimulated by HscB. This Shewanella loihica (strain ATCC BAA-1088 / PV-4) protein is Chaperone protein HscA homolog.